Consider the following 225-residue polypeptide: Protein-L-isoaspartate O-methyltransferase (225 aa).

S75 is an active-site residue.

Belongs to the methyltransferase superfamily. L-isoaspartyl/D-aspartyl protein methyltransferase family.

The protein localises to the cytoplasm. It catalyses the reaction [protein]-L-isoaspartate + S-adenosyl-L-methionine = [protein]-L-isoaspartate alpha-methyl ester + S-adenosyl-L-homocysteine. Its function is as follows. Catalyzes the methyl esterification of L-isoaspartyl residues in peptides and proteins that result from spontaneous decomposition of normal L-aspartyl and L-asparaginyl residues. It plays a role in the repair and/or degradation of damaged proteins. This chain is Protein-L-isoaspartate O-methyltransferase, found in Stenotrophomonas maltophilia (strain K279a).